Consider the following 401-residue polypeptide: Imidazolonepropionase (401 aa).

Residues H66 and H68 each coordinate Fe(3+). Residues H66 and H68 each contribute to the Zn(2+) site. The 4-imidazolone-5-propanoate site is built by R75, Y138, and H171. Y138 lines the N-formimidoyl-L-glutamate pocket. H236 provides a ligand contact to Fe(3+). H236 contacts Zn(2+). Residue Q239 coordinates 4-imidazolone-5-propanoate. D311 lines the Fe(3+) pocket. D311 is a Zn(2+) binding site. N-formimidoyl-L-glutamate-binding residues include N313 and G315. T316 is a binding site for 4-imidazolone-5-propanoate.

This sequence belongs to the metallo-dependent hydrolases superfamily. HutI family. The cofactor is Zn(2+). Requires Fe(3+) as cofactor.

Its subcellular location is the cytoplasm. It catalyses the reaction 4-imidazolone-5-propanoate + H2O = N-formimidoyl-L-glutamate. It participates in amino-acid degradation; L-histidine degradation into L-glutamate; N-formimidoyl-L-glutamate from L-histidine: step 3/3. In terms of biological role, catalyzes the hydrolytic cleavage of the carbon-nitrogen bond in imidazolone-5-propanoate to yield N-formimidoyl-L-glutamate. It is the third step in the universal histidine degradation pathway. The polypeptide is Imidazolonepropionase (Pseudomonas entomophila (strain L48)).